The chain runs to 255 residues: 3-alpha-(or 20-beta)-hydroxysteroid dehydrogenase (255 aa).

Ile-10–Val-34 provides a ligand contact to NAD(+). Ser-139 contacts substrate. Tyr-152 (proton acceptor) is an active-site residue.

The protein belongs to the short-chain dehydrogenases/reductases (SDR) family. As to quaternary structure, homotetramer.

It carries out the reaction androstan-3alpha,17beta-diol + NAD(+) = 17beta-hydroxyandrostanone + NADH + H(+). It functions in the pathway lipid metabolism; C21-steroid hormone metabolism. In Streptomyces exfoliatus (Streptomyces hydrogenans), this protein is 3-alpha-(or 20-beta)-hydroxysteroid dehydrogenase.